Here is a 244-residue protein sequence, read N- to C-terminus: Krueppel-like factor 9 (244 aa).

2 disordered regions span residues 24-51 (VPEH…GDPG) and 80-142 (SVCS…SEKR). Over residues 32–51 (DAERLRLPEREVTKEHGDPG) the composition is skewed to basic and acidic residues. Phosphoserine is present on serine 122. 3 consecutive C2H2-type zinc fingers follow at residues 143 to 167 (HKCP…YRVH), 173 to 197 (FPCT…YRTH), and 203 to 225 (FRCP…ARRH).

This sequence belongs to the Sp1 C2H2-type zinc-finger protein family. Interacts with ZZEF1.

The protein resides in the nucleus. Functionally, transcription factor that binds to GC box promoter elements. Selectively activates mRNA synthesis from genes containing tandem repeats of GC boxes but represses genes with a single GC box. Acts as an epidermal circadian transcription factor regulating keratinocyte proliferation. The sequence is that of Krueppel-like factor 9 (KLF9) from Sus scrofa (Pig).